We begin with the raw amino-acid sequence, 209 residues long: Uracil phosphoribosyltransferase (209 aa).

5-phospho-alpha-D-ribose 1-diphosphate contacts are provided by residues Arg79, Arg104, and 131 to 139 (DPMLATGNS). Uracil is bound by residues Ile194 and 199 to 201 (GDA). Asp200 lines the 5-phospho-alpha-D-ribose 1-diphosphate pocket.

Belongs to the UPRTase family. Mg(2+) is required as a cofactor.

It catalyses the reaction UMP + diphosphate = 5-phospho-alpha-D-ribose 1-diphosphate + uracil. It functions in the pathway pyrimidine metabolism; UMP biosynthesis via salvage pathway; UMP from uracil: step 1/1. With respect to regulation, allosterically activated by GTP. In terms of biological role, catalyzes the conversion of uracil and 5-phospho-alpha-D-ribose 1-diphosphate (PRPP) to UMP and diphosphate. The chain is Uracil phosphoribosyltransferase from Sinorhizobium fredii (strain NBRC 101917 / NGR234).